The chain runs to 639 residues: UvrABC system protein C (639 aa).

The GIY-YIG domain occupies 20–97 (ERSGVYRMFD…IKKFQPKFNI (78 aa)). In terms of domain architecture, UVR spans 207-242 (KELQENLSRKMEELSSQMRFEEAAEIRDRIKALSYV).

This sequence belongs to the UvrC family. Interacts with UvrB in an incision complex.

It localises to the cytoplasm. Functionally, the UvrABC repair system catalyzes the recognition and processing of DNA lesions. UvrC both incises the 5' and 3' sides of the lesion. The N-terminal half is responsible for the 3' incision and the C-terminal half is responsible for the 5' incision. In Rickettsia conorii (strain ATCC VR-613 / Malish 7), this protein is UvrABC system protein C.